A 143-amino-acid polypeptide reads, in one-letter code: 3-hydroxyacyl-[acyl-carrier-protein] dehydratase FabZ (143 aa).

Residue His-48 is part of the active site.

Belongs to the thioester dehydratase family. FabZ subfamily.

Its subcellular location is the cytoplasm. It carries out the reaction a (3R)-hydroxyacyl-[ACP] = a (2E)-enoyl-[ACP] + H2O. Involved in unsaturated fatty acids biosynthesis. Catalyzes the dehydration of short chain beta-hydroxyacyl-ACPs and long chain saturated and unsaturated beta-hydroxyacyl-ACPs. This Roseiflexus castenholzii (strain DSM 13941 / HLO8) protein is 3-hydroxyacyl-[acyl-carrier-protein] dehydratase FabZ.